A 362-amino-acid chain; its full sequence is DNA replication and repair protein RecF (362 aa).

ATP is bound at residue 30–37 (GLNAQGKS).

This sequence belongs to the RecF family.

It is found in the cytoplasm. Functionally, the RecF protein is involved in DNA metabolism; it is required for DNA replication and normal SOS inducibility. RecF binds preferentially to single-stranded, linear DNA. It also seems to bind ATP. This Thermoanaerobacter sp. (strain X514) protein is DNA replication and repair protein RecF.